The sequence spans 75 residues: Small ribosomal subunit protein bS18 (75 aa).

This sequence belongs to the bacterial ribosomal protein bS18 family. Part of the 30S ribosomal subunit. Forms a tight heterodimer with protein bS6.

In terms of biological role, binds as a heterodimer with protein bS6 to the central domain of the 16S rRNA, where it helps stabilize the platform of the 30S subunit. In Pseudoalteromonas atlantica (strain T6c / ATCC BAA-1087), this protein is Small ribosomal subunit protein bS18.